The primary structure comprises 585 residues: Arginine--tRNA ligase (585 aa).

Positions 131–141 (ANPTGPMHVGH) match the 'HIGH' region motif.

The protein belongs to the class-I aminoacyl-tRNA synthetase family. Monomer.

Its subcellular location is the cytoplasm. It catalyses the reaction tRNA(Arg) + L-arginine + ATP = L-arginyl-tRNA(Arg) + AMP + diphosphate. This Chelativorans sp. (strain BNC1) protein is Arginine--tRNA ligase.